The primary structure comprises 393 residues: Formate-dependent phosphoribosylglycinamide formyltransferase (393 aa).

Residues 22-23 (EL) and E82 each bind N(1)-(5-phospho-beta-D-ribosyl)glycinamide. ATP contacts are provided by residues R114, K155, 160–165 (SSGKGQ), 195–198 (EGFV), and E203. Positions 119 to 308 (RLAAEELGLV…EFALHVRAIL (190 aa)) constitute an ATP-grasp domain. Residues E267 and E279 each contribute to the Mg(2+) site. Residues D286, K356, and 363–364 (RR) each bind N(1)-(5-phospho-beta-D-ribosyl)glycinamide.

This sequence belongs to the PurK/PurT family. In terms of assembly, homodimer.

The enzyme catalyses N(1)-(5-phospho-beta-D-ribosyl)glycinamide + formate + ATP = N(2)-formyl-N(1)-(5-phospho-beta-D-ribosyl)glycinamide + ADP + phosphate + H(+). Its pathway is purine metabolism; IMP biosynthesis via de novo pathway; N(2)-formyl-N(1)-(5-phospho-D-ribosyl)glycinamide from N(1)-(5-phospho-D-ribosyl)glycinamide (formate route): step 1/1. In terms of biological role, involved in the de novo purine biosynthesis. Catalyzes the transfer of formate to 5-phospho-ribosyl-glycinamide (GAR), producing 5-phospho-ribosyl-N-formylglycinamide (FGAR). Formate is provided by PurU via hydrolysis of 10-formyl-tetrahydrofolate. This Solidesulfovibrio magneticus (strain ATCC 700980 / DSM 13731 / RS-1) (Desulfovibrio magneticus) protein is Formate-dependent phosphoribosylglycinamide formyltransferase.